A 482-amino-acid chain; its full sequence is tRNA sulfurtransferase (482 aa).

The region spanning 61 to 165 (QQVLEILTTT…DDKLNQILAH (105 aa)) is the THUMP domain. Residues 183–184 (LI), Lys265, Gly287, and Gln296 contribute to the ATP site. An intrachain disulfide couples Cys344 to Cys456. A Rhodanese domain is found at 404-482 (IEEHAVVLDI…GFNNVKVYRP (79 aa)). The Cysteine persulfide intermediate role is filled by Cys456.

Belongs to the ThiI family.

Its subcellular location is the cytoplasm. It carries out the reaction [ThiI sulfur-carrier protein]-S-sulfanyl-L-cysteine + a uridine in tRNA + 2 reduced [2Fe-2S]-[ferredoxin] + ATP + H(+) = [ThiI sulfur-carrier protein]-L-cysteine + a 4-thiouridine in tRNA + 2 oxidized [2Fe-2S]-[ferredoxin] + AMP + diphosphate. The enzyme catalyses [ThiS sulfur-carrier protein]-C-terminal Gly-Gly-AMP + S-sulfanyl-L-cysteinyl-[cysteine desulfurase] + AH2 = [ThiS sulfur-carrier protein]-C-terminal-Gly-aminoethanethioate + L-cysteinyl-[cysteine desulfurase] + A + AMP + 2 H(+). The protein operates within cofactor biosynthesis; thiamine diphosphate biosynthesis. Functionally, catalyzes the ATP-dependent transfer of a sulfur to tRNA to produce 4-thiouridine in position 8 of tRNAs, which functions as a near-UV photosensor. Also catalyzes the transfer of sulfur to the sulfur carrier protein ThiS, forming ThiS-thiocarboxylate. This is a step in the synthesis of thiazole, in the thiamine biosynthesis pathway. The sulfur is donated as persulfide by IscS. The protein is tRNA sulfurtransferase of Vibrio vulnificus (strain CMCP6).